The chain runs to 372 residues: 3-dehydroquinate synthase (372 aa).

Residues 113 to 117, 137 to 138, lysine 150, lysine 159, and 177 to 180 contribute to the NAD(+) site; these read GVIGD, TS, and TLKT. Glutamate 192, histidine 257, and histidine 274 together coordinate Zn(2+).

It belongs to the sugar phosphate cyclases superfamily. Dehydroquinate synthase family. It depends on Co(2+) as a cofactor. The cofactor is Zn(2+). Requires NAD(+) as cofactor.

The protein localises to the cytoplasm. It carries out the reaction 7-phospho-2-dehydro-3-deoxy-D-arabino-heptonate = 3-dehydroquinate + phosphate. It participates in metabolic intermediate biosynthesis; chorismate biosynthesis; chorismate from D-erythrose 4-phosphate and phosphoenolpyruvate: step 2/7. In terms of biological role, catalyzes the conversion of 3-deoxy-D-arabino-heptulosonate 7-phosphate (DAHP) to dehydroquinate (DHQ). The polypeptide is 3-dehydroquinate synthase (Acaryochloris marina (strain MBIC 11017)).